The primary structure comprises 527 residues: Putative ABC transporter peptide-binding protein BMEII0859 (527 aa).

The first 23 residues, 1 to 23 (MRLRNFYSALALSAAVFAGPLYA), serve as a signal peptide directing secretion.

The protein belongs to the bacterial solute-binding protein 5 family. The complex is composed of two ATP-binding proteins (BMEII0863 and BMEII0864), two transmembrane proteins (BMEII0860 and BMEII0861) and a solute-binding protein (BMEII0859).

The protein resides in the periplasm. Probably part of an ABC transporter complex that could be involved in peptide import. This Brucella melitensis biotype 1 (strain ATCC 23456 / CCUG 17765 / NCTC 10094 / 16M) protein is Putative ABC transporter peptide-binding protein BMEII0859.